Here is a 618-residue protein sequence, read N- to C-terminus: MFDLEYQLKNLPDKPGVYLMKNNLGEIIYVGKAKILKNRVRQYFQKSQKHSEKVKAMVKNIEEFEYIITDSEIEALILECNLIKKYRPKYNILLKDDKHYPFIKVTLAEDFPRVVSTRKVTKDGSKYFGPYVDGSSVKDIIELIKKTFPIRTCKKNIVEGAKAIRPCLNYQIGLCKAPCAQYIKKSEYREIIDDVIKLLSGKHLDIVENFKLNMERAAENLEFEKAAMLRDKINIIEKIGEKQKIILNNFDNEDYISLYSDGKDTCFQVFFLRNGKIVGREHFIIEDTFDTNSSTLISNFLKEFYGGTAYIPKTIYVPNIEDEALLEQWLTLKKESKSTIKIPIKGEKKNILVLVEKNAKTTLENFKLKYLQEKALYDNVLKDLKNILRLQEEPIRIEAFDISNIQGFDSVGSMVVFEKGRAKPSDYRRFKINTVKGADDYKSMKEILTRRFQHGLSEIKSIQDRKLEFSSGKFSVFPDLILMDGGKGQINIALEVLNTFNIDIPVCGMVKDNKHRTRGLIYNGEEIIINKYGSVMKFITRVQDEVHRFAISYHRSLRGKNSFHSLLDDIPNIGEKRKKDLLFNFKSIDNIKKATYEELLSIPSMDKKSAECVLEFFK.

One can recognise a GIY-YIG domain in the interval 13–92 (DKPGVYLMKN…IKKYRPKYNI (80 aa)). Residues 204-239 (LDIVENFKLNMERAAENLEFEKAAMLRDKINIIEKI) enclose the UVR domain.

It belongs to the UvrC family. Interacts with UvrB in an incision complex.

The protein resides in the cytoplasm. Its function is as follows. The UvrABC repair system catalyzes the recognition and processing of DNA lesions. UvrC both incises the 5' and 3' sides of the lesion. The N-terminal half is responsible for the 3' incision and the C-terminal half is responsible for the 5' incision. In Clostridium botulinum (strain Langeland / NCTC 10281 / Type F), this protein is UvrABC system protein C.